The sequence spans 106 residues: ATP-dependent Clp protease adapter protein ClpS (106 aa).

The protein belongs to the ClpS family. Binds to the N-terminal domain of the chaperone ClpA.

In terms of biological role, involved in the modulation of the specificity of the ClpAP-mediated ATP-dependent protein degradation. This chain is ATP-dependent Clp protease adapter protein ClpS, found in Escherichia fergusonii (strain ATCC 35469 / DSM 13698 / CCUG 18766 / IAM 14443 / JCM 21226 / LMG 7866 / NBRC 102419 / NCTC 12128 / CDC 0568-73).